A 603-amino-acid chain; its full sequence is Complement factor I (603 aa).

Residues 1–18 (MKLAHLSLFLLALHLSSS) form the signal peptide. Disulfide bonds link C36/C260, C46/C57, C51/C62, C64/C96, C70/C89, C78/C109, C144/C186, C157/C219, C191/C201, C234/C252, C246/C261, C264/C276, C271/C289, C283/C298, C348/C473, C386/C402, C394/C464, C487/C551, C515/C530, and C541/C570. One can recognise a Kazal-like domain in the interval 58–111 (IEGTCICKLPYQCPRAGTPVCAMNGRSYPTYCHQKSFECLHPEIKFSHNGTCAA). N-linked (GlcNAc...) asparagine glycans are attached at residues N106, N116, N174, and N182. The SRCR domain maps to 117–217 (VSLIYGRTKT…TELSNGLAGV (101 aa)). LDL-receptor class A domains follow at residues 218–262 (VCYK…LCCK) and 263–299 (GCRG…SRCE). Residues K244, N247, V249, D251, D257, and E258 each contribute to the Ca(2+) site. A glycan (N-linked (GlcNAc...) asparagine) is linked at N267. Positions 281, 284, 286, 288, 294, and 295 each coordinate Ca(2+). A Peptidase S1 domain is found at 361–594 (VIGGKPANVG…YFDWISYHVG (234 aa)). Catalysis depends on charge relay system residues H401 and D449. The N-linked (GlcNAc...) asparagine glycan is linked to N514. The active-site Charge relay system is S545. The N-linked (GlcNAc...) asparagine glycan is linked to N556.

This sequence belongs to the peptidase S1 family. As to quaternary structure, heterodimer of a light and heavy chains; disulfide-linked. The fully processed and mature protein circulates as a zymogen, and is allosterically activated by substrate-induced remodeling of the active site. Interacts with C3b. Interacts with complement factor H. Expressed in the liver by hepatocytes. Also present in other cells such as monocytes, fibroblasts or keratinocytes.

It is found in the secreted. The protein localises to the extracellular space. It catalyses the reaction Inactivates complement subcomponents C3b, iC3b and C4b by proteolytic cleavage.. Functionally, trypsin-like serine protease that plays an essential role in regulating the immune response by controlling all complement pathways. Inhibits these pathways by cleaving three peptide bonds in the alpha-chain of C3b and two bonds in the alpha-chain of C4b thereby inactivating these proteins. Essential cofactors for these reactions include factor H and C4BP in the fluid phase and membrane cofactor protein/CD46 and CR1 on cell surfaces. The presence of these cofactors on healthy cells allows degradation of deposited C3b by CFI in order to prevent undesired complement activation, while in apoptotic cells or microbes, the absence of such cofactors leads to C3b-mediated complement activation and subsequent opsonization. This is Complement factor I (Cfi) from Mus musculus (Mouse).